We begin with the raw amino-acid sequence, 203 residues long: Recombination protein RecR (203 aa).

The segment at 56–71 (CAVCGNVSDDERCRIC) adopts a C4-type zinc-finger fold. The Toprim domain maps to 79 to 179 (ALVCVVEEPK…TVTRIASGLP (101 aa)).

The protein belongs to the RecR family.

Its function is as follows. May play a role in DNA repair. It seems to be involved in an RecBC-independent recombinational process of DNA repair. It may act with RecF and RecO. The protein is Recombination protein RecR of Mycobacterium ulcerans (strain Agy99).